Here is a 251-residue protein sequence, read N- to C-terminus: Phosphate import ATP-binding protein PstB 2 (251 aa).

Residues 5-246 (ITSKDVHLSY…PKKQITSDYL (242 aa)) form the ABC transporter domain. 37-44 (GPSGCGKS) serves as a coordination point for ATP.

The protein belongs to the ABC transporter superfamily. Phosphate importer (TC 3.A.1.7) family. In terms of assembly, the complex is composed of two ATP-binding proteins (PstB), two transmembrane proteins (PstC and PstA) and a solute-binding protein (PstS).

It localises to the cell membrane. The enzyme catalyses phosphate(out) + ATP + H2O = ADP + 2 phosphate(in) + H(+). Part of the ABC transporter complex PstSACB involved in phosphate import. Responsible for energy coupling to the transport system. In Lactobacillus johnsonii (strain CNCM I-12250 / La1 / NCC 533), this protein is Phosphate import ATP-binding protein PstB 2.